Here is a 264-residue protein sequence, read N- to C-terminus: Stage IV sporulation protein FA (264 aa).

A compositionally biased stretch (basic and acidic residues) spans 1-10; that stretch reads MSHRADEIRK. Residues 1-37 form a disordered region; the sequence is MSHRADEIRKRLEKRRKQLSGSKRFSTQTVSEKQKPP. Residues 1–72 are Mother cell cytoplasmic-facing; that stretch reads MSHRADEIRK…GKHPLVKTDS (72 aa). Residues 19–31 are compositionally biased toward polar residues; it reads LSGSKRFSTQTVS. A helical membrane pass occupies residues 73–90; that stretch reads IILKCLLSACLVLVSAIA. Over 91-264 the chain is Forespore intermembrane space; it reads YKTNIGPVSQ…IDPIQVISFE (174 aa).

In terms of assembly, forms a complex with BofA and SpoIVFB localized in the mother-cell membrane surrounding the forespore. May be degraded by FtsH. It is stabilized by an ftsH disruption mutant, and in a probably independent fashion, by overexpression of BofA.

It localises to the forespore outer membrane. Implicated in the coupling of mother cell to forespore gene expression. Required for spore formation at 37 degrees Celsius, but not at 30 degrees Celsius. SpoIVFA plays a central role in both maintaining the SpoIVFA/BofA/SpoIVFB complex and anchoring it to the outer forespore membrane. SpoIVFA brings BofA into close proximity to SpoIVFB, allowing BofA to inhibit SpoIVFB. Increased accumulation of SpoIVFA seems to inhibit the activity of SpoIVFB and thus regulates the activation of sigma-K. In Bacillus subtilis (strain 168), this protein is Stage IV sporulation protein FA (spoIVFA).